The sequence spans 147 residues: Hemoglobin subunit epsilon (147 aa).

The region spanning 3-147 (HFTAEEKNAI…VANALAHKYH (145 aa)) is the Globin domain. Phosphoserine is present on Ser51. Positions 64 and 93 each coordinate heme b.

Belongs to the globin family. In terms of assembly, heterotetramer of two alpha chains and two epsilon chains in early embryonic hemoglobin Gower-2; two zeta chains and two epsilon chains in early embryonic hemoglobin Gower-1. In terms of tissue distribution, red blood cells.

Functionally, the epsilon chain is a beta-type chain of early mammalian embryonic hemoglobin. The sequence is that of Hemoglobin subunit epsilon (HBE1) from Sminthopsis crassicaudata (Fat-tailed dunnart).